We begin with the raw amino-acid sequence, 346 residues long: MNQNKNNNNKNPKINLLIIGCGCIGLSTGIIALKSGNYKSVSIWAKDLPPNTTSNKAAALWYPFLCNPLDLVGKWSAETMQYYKDHIINDPKSGTITKKVNEIFRRPHPEDPEWKPYIKSFRRARKDELPDGYVDGYAIDDGFVMDTDMYMDYLVDQFKSLGGIIEQRHLVDIREAFVDHDVVVNCTGLGSRELFNDRTIYPGRGQIIVIKNSTDRSIMDEEDHIAYVIPRLTNTVLGGTNQEHDYNTNPTKKDTEEILKRVAMISPRFAKNRIEIQGVKVGLRPARHEIRLENEFFEGGSKLVVHNYGHGGSGFTVSWGCAIEAIKLVDQGLPKLLHFNKLISKL.

Positions 22, 24, 52, 53, 54, 58, 59, 60, and 187 each coordinate FAD. The D-proline site is built by Tyr227 and Arg284. Positions 227 and 284 each coordinate D-serine. The FAD site is built by Arg284, Gly311, Gly312, Gly314, and Thr316. D-dopa is bound at residue Arg284. Residue Gly312 coordinates D-proline. A D-serine-binding site is contributed by Gly312. Residue Gly312 participates in D-dopa binding. The short motif at 344 to 346 (SKL) is the Microbody targeting signal element.

It belongs to the DAMOX/DASOX family. FAD serves as cofactor.

It is found in the peroxisome matrix. The catalysed reaction is a D-alpha-amino acid + O2 + H2O = a 2-oxocarboxylate + H2O2 + NH4(+). It carries out the reaction D-serine + O2 + H2O = 3-hydroxypyruvate + H2O2 + NH4(+). It catalyses the reaction D-phenylalanine + O2 + H2O = 3-phenylpyruvate + H2O2 + NH4(+). The enzyme catalyses D-alanine + O2 + H2O = pyruvate + H2O2 + NH4(+). The catalysed reaction is D-arginine + O2 + H2O = 5-guanidino-2-oxopentanoate + H2O2 + NH4(+). It carries out the reaction D-methionine + O2 + H2O = 4-methylsulfanyl-2-oxobutanoate + H2O2 + NH4(+). It catalyses the reaction D-ornithine + O2 + H2O = 5-amino-2-oxopentanoate + H2O2 + NH4(+). The enzyme catalyses D-leucine + O2 + H2O = 4-methyl-2-oxopentanoate + H2O2 + NH4(+). The catalysed reaction is D-lysine + O2 + H2O = 6-amino-2-oxohexanoate + H2O2 + NH4(+). It carries out the reaction D-proline + O2 = 1-pyrroline-2-carboxylate + H2O2. It catalyses the reaction D-valine + O2 + H2O = 3-methyl-2-oxobutanoate + H2O2 + NH4(+). The enzyme catalyses D-histidine + O2 + H2O = 3-(imidazol-5-yl)pyruvate + H2O2 + NH4(+). Its function is as follows. Catalyzes the oxidative deamination of D-amino acids with broad substrate specificity. Has low in vitro and no in vivo activity on D-serine; primary D-serine degradation is performed by the D-serine dehydratase dsd. This chain is D-amino-acid oxidase (ddo-1), found in Dictyostelium discoideum (Social amoeba).